The primary structure comprises 688 residues: Polymerase acidic protein (688 aa).

2 disordered regions span residues 54–82 and 110–129; these read NTEPRERSHTQAEGEEEGSSSRSLATEEG and EAQANSDSEGPNEADSGGEG. The span at 56–65 shows a compositional bias: basic and acidic residues; that stretch reads EPRERSHTQA. Acidic residues predominate over residues 119-129; sequence GPNEADSGGEG.

As to quaternary structure, RNA polymerase is composed of three subunits: PA, PB1 and PB2.

Its subcellular location is the virion. The protein localises to the host nucleus. Functionally, subunit of the RNA-dependent RNA polymerase which is responsible for replication and transcription of virus RNA segments. The transcription of viral mRNAs occurs by a unique mechanism called cap-snatching. 5' methylated caps of cellular mRNAs are cleaved after 10-13 nucleotides by PA. In turn, these short capped RNAs are used as primers by PB1 for transcription of viral mRNAs. During virus replication, PB1 initiates RNA synthesis and copy vRNA into complementary RNA (cRNA) which in turn serves as a template for the production of more vRNAs. The protein is Polymerase acidic protein (PA) of Ixodidae (hardbacked ticks).